A 1025-amino-acid polypeptide reads, in one-letter code: Error-prone DNA polymerase (1025 aa).

This sequence belongs to the DNA polymerase type-C family. DnaE2 subfamily.

The protein resides in the cytoplasm. The enzyme catalyses DNA(n) + a 2'-deoxyribonucleoside 5'-triphosphate = DNA(n+1) + diphosphate. In terms of biological role, DNA polymerase involved in damage-induced mutagenesis and translesion synthesis (TLS). It is not the major replicative DNA polymerase. In Pseudomonas fluorescens (strain Pf0-1), this protein is Error-prone DNA polymerase.